The following is a 114-amino-acid chain: Large ribosomal subunit protein bL19 (114 aa).

It belongs to the bacterial ribosomal protein bL19 family.

Its function is as follows. This protein is located at the 30S-50S ribosomal subunit interface and may play a role in the structure and function of the aminoacyl-tRNA binding site. This Halalkalibacterium halodurans (strain ATCC BAA-125 / DSM 18197 / FERM 7344 / JCM 9153 / C-125) (Bacillus halodurans) protein is Large ribosomal subunit protein bL19.